The primary structure comprises 159 residues: RNA pyrophosphohydrolase (159 aa).

In terms of domain architecture, Nudix hydrolase spans 6 to 149 (GFRPNVGIIL…KREVYRRALK (144 aa)). The short motif at 38-59 (GGINPDETPEDALYRELNEEVG) is the Nudix box element.

This sequence belongs to the Nudix hydrolase family. RppH subfamily. A divalent metal cation is required as a cofactor.

Functionally, accelerates the degradation of transcripts by removing pyrophosphate from the 5'-end of triphosphorylated RNA, leading to a more labile monophosphorylated state that can stimulate subsequent ribonuclease cleavage. In Pseudomonas fluorescens (strain ATCC BAA-477 / NRRL B-23932 / Pf-5), this protein is RNA pyrophosphohydrolase.